The chain runs to 375 residues: WAT1-related protein At1g70260 (375 aa).

10 helical membrane-spanning segments follow: residues 10–30 (LVPF…TIMA), 41–61 (FVFV…FSFL), 72–92 (IFSW…IFMF), 106–126 (IVVC…SIIL), 143–163 (MGTI…GPFI), 191–211 (WFLG…FNVV), 225–245 (VASF…LFME), 259–278 (LYLI…SVHV), 289–309 (VPLF…SFFV), and 312–332 (LHYG…TVSW). The 110-residue stretch at 25 to 134 (ALTIMAKTAL…ILGRSKLDWR (110 aa)) folds into the EamA domain. Residues 337-356 (ESEEKQSSNEERKSIKTIHH) are disordered.

The protein belongs to the drug/metabolite transporter (DMT) superfamily. Plant drug/metabolite exporter (P-DME) (TC 2.A.7.4) family.

The protein resides in the membrane. The sequence is that of WAT1-related protein At1g70260 from Arabidopsis thaliana (Mouse-ear cress).